Reading from the N-terminus, the 463-residue chain is Asparagine--tRNA ligase (463 aa).

Belongs to the class-II aminoacyl-tRNA synthetase family. As to quaternary structure, homodimer.

It localises to the cytoplasm. It carries out the reaction tRNA(Asn) + L-asparagine + ATP = L-asparaginyl-tRNA(Asn) + AMP + diphosphate + H(+). The polypeptide is Asparagine--tRNA ligase (Alkaliphilus oremlandii (strain OhILAs) (Clostridium oremlandii (strain OhILAs))).